The primary structure comprises 208 residues: FMN-dependent NADH:quinone oxidoreductase (208 aa).

FMN contacts are provided by residues 17–19 (SNS), 99–102 (MWNL), and 143–146 (SRGG).

This sequence belongs to the azoreductase type 1 family. In terms of assembly, homodimer. FMN is required as a cofactor.

The enzyme catalyses 2 a quinone + NADH + H(+) = 2 a 1,4-benzosemiquinone + NAD(+). It carries out the reaction N,N-dimethyl-1,4-phenylenediamine + anthranilate + 2 NAD(+) = 2-(4-dimethylaminophenyl)diazenylbenzoate + 2 NADH + 2 H(+). Functionally, quinone reductase that provides resistance to thiol-specific stress caused by electrophilic quinones. Also exhibits azoreductase activity. Catalyzes the reductive cleavage of the azo bond in aromatic azo compounds to the corresponding amines. In Staphylococcus carnosus (strain TM300), this protein is FMN-dependent NADH:quinone oxidoreductase.